A 396-amino-acid chain; its full sequence is Potassium channel subfamily K member 9 (396 aa).

Over 1-8 (MKRQNVRT) the chain is Cytoplasmic. A helical transmembrane segment spans residues 9 to 29 (LSLIACTFTYLLVGAAVFDAL). Residues 30-88 (ESDHEMREEEKLKAEEVRLRGKYNISSDDYQQLELVILQSEPHRAGVQWKFAGSFYFAI) are Extracellular-facing. N-linked (GlcNAc...) asparagine glycosylation occurs at Asn-53. Residues 89-101 (TVITTIGYGHAAP) constitute an intramembrane region (pore-forming). Thr-93, Ile-94, Gly-95, and Tyr-96 together coordinate K(+). The selectivity filter 1 stretch occupies residues 93 to 98 (TIGYGH). The Extracellular portion of the chain corresponds to 102-107 (GTDAGK). Residues 108 to 128 (AFCMFYAVLGIPLTLVMFQSL) traverse the membrane as a helical segment. The Cytoplasmic segment spans residues 129 to 158 (GERMNTFVRYLLKRIKKCCGMRNTEVSMEN). The chain crosses the membrane as a helical span at residues 159-179 (MVTVGFFSCMGTLCLGAAAFS). The Extracellular portion of the chain corresponds to 180-194 (QCEDWSFFHAYYYCF). The pore-forming intramembrane region spans 195–207 (ITLTTIGFGDFVA). Residues Thr-199, Ile-200, Gly-201, and Phe-202 each contribute to the K(+) site. The interval 199–204 (TIGFGD) is selectivity filter 2. The Extracellular segment spans residues 208-218 (LQSKGALQRKP). Residues 219-239 (FYVAFSFMYILVGLTVIGAFL) traverse the membrane as a helical segment. Residues 240–396 (NLVVLRFLTM…HRLHIRRKSI (157 aa)) lie on the Cytoplasmic side of the membrane. Positions 243–248 (VLRFLT) are X-gate.

This sequence belongs to the two pore domain potassium channel (TC 1.A.1.8) family. In terms of assembly, homodimer. Heterodimer with KCNK1. Heterodimer with KCNK3. Highly expressed in the CNS and at lower levels in the colon, kidney, liver, lung, spleen, stomach and skeletal muscle. The highest expression was found in the olfactory nuclei, piriform cortex, cerebellum, antedorsal thalmic nucleus, pontine nucleus, dorsal raphe and several nuclei in the medulla. Shows a non-homogeneous distribution in the hippocampus. Expressed at highest levels in the lateral posterior and inferior portions and at medium levels in neocortex. Expressed in motoneurons, including hypoglossal motoneurons (at protein level).

The protein localises to the cell membrane. Its subcellular location is the mitochondrion inner membrane. It localises to the cell projection. It is found in the dendrite. The enzyme catalyses K(+)(in) = K(+)(out). It catalyses the reaction Na(+)(in) = Na(+)(out). Its activity is regulated as follows. Activated by halothane and isoflurane. Inhibited by external acidification, diacylglycerol, anandamide and AGT/angiotensin II. Ruthenium red inhibits homomeric but not KCNK3:KCNK9 heteromeric channels. In terms of biological role, k(+) channel that conducts voltage-dependent outward rectifying currents upon membrane depolarization. Voltage sensing is coupled to K(+) electrochemical gradient in an 'ion flux gating' mode where outward but not inward ion flow opens the gate. Changes ion selectivity and becomes permeable to Na(+) ions in response to extracellular acidification. Protonation of the pH sensor His-98 stabilizes C-type inactivation conformation likely converting the channel from outward K(+)-conducting, to inward Na(+)-conducting to nonconductive state. Homo- and heterodimerizes to form functional channels with distinct regulatory and gating properties. Allows K(+) currents with fast-gating kinetics important for the repolarization and hyperpolarization phases of action potentials. In granule neurons, hyperpolarizes the resting membrane potential to limit intrinsic neuronal excitability, but once the action potential threshold is reached, supports high-frequency action potential firing and increased neuronal excitability. Homomeric and/or heteromeric KCNK3:KCNK9 channels operate in cerebellar granule cells, whereas heteromeric KCNK1:KCNK9 enables currents in hippocampal dentate gyrus granule neurons. Dispensable for central chemosensory respiration i.e. breathing controlled by brainstem CO2/pH, it rather conducts pH-sensitive currents and controls the firing rate of serotonergic raphe neurons involved in potentiation of the respiratory chemoreflex. In retinal ganglion cells, mediates outward rectifying currents that regulate action potentials in response to acidification of the synaptic cleft. Involved in transmission of image-forming and nonimage-forming visual information in the retina. In adrenal gland, contributes to the maintenance of a hyperpolarized resting membrane potential of aldosterone-producing cells at zona glomerulosa and limits aldosterone release as part of a regulatory mechanism that controls arterial blood pressure and electrolyte homeostasis. In Rattus norvegicus (Rat), this protein is Potassium channel subfamily K member 9.